Reading from the N-terminus, the 519-residue chain is Cell division cycle protein 20 homolog B (519 aa).

Positions 79–98 (QSQTRALSSDSFGEEQSTTY) are enriched in polar residues. Residues 79–133 (QSQTRALSSDSFGEEQSTTYLPEASGSVLKTPPEKETLTLGSRKEQLKTPSKGIS) form a disordered region. The segment covering 110–125 (PPEKETLTLGSRKEQL) has biased composition (basic and acidic residues). WD repeat units follow at residues 229 to 266 (RNDY…GIEN), 271 to 310 (LTCN…RLRN), 311 to 341 (MLGH…YHHD), 353 to 392 (RHKQ…SAQG), 399 to 441 (TQST…SIQT), 443 to 484 (STNS…RSGG), and 487 to 519 (GHRG…WNCY).

It belongs to the WD repeat CDC20/Fizzy family. Expressed in multiciliated cells (MCCs).

The protein localises to the cytoplasm. Functionally, protein regulator of centriole-deuterosome disengagement and subsequently participates in the ciliogenesis in multiciliated cells (MCCs). The sequence is that of Cell division cycle protein 20 homolog B from Homo sapiens (Human).